A 144-amino-acid polypeptide reads, in one-letter code: Snake venom vascular endothelial growth factor toxin VR-1 (144 aa).

A signal peptide spans M1–G24. Residue Q25 is modified to Pyrrolidone carboxylic acid. Disulfide bonds link C38-C80, C69-C115, and C73-C117. Residues R120–R134 show a composition bias toward basic and acidic residues. Residues R120–D144 are disordered. Residues R134–D144 constitute a propeptide that is removed on maturation.

Belongs to the PDGF/VEGF growth factor family. Snake venom VEGF subfamily. Homodimer; disulfide-linked. Interacts with VEGF receptor-2 (KDR) with high affinity, but not with VEGF receptor-1 (Flt-1), VEGF receptor-3 (FLT4), and neuropilin-1 (NRP1). In terms of tissue distribution, expressed by the venom gland.

Its subcellular location is the secreted. Functionally, snake venom VEGFs may contribute to venom dispersion and prey subjugation by inducing vascular permeability and hypotension. This protein induces angiogenesis probably through VEGF receptor (KDR/VEGFR-2) signaling, as well as drastic hypotension. The hypotension is mediated by nitric oxide, which is produced by VEGF-activated endothelium NO synthase. May also induce vascular permeability. This Daboia russelii (Russel's viper) protein is Snake venom vascular endothelial growth factor toxin VR-1.